Reading from the N-terminus, the 210-residue chain is FMN-dependent NADH:quinone oxidoreductase (210 aa).

Residues 17 to 19, 102 to 105, and 148 to 151 contribute to the FMN site; these read SRS, MWNL, and SCGG.

The protein belongs to the azoreductase type 1 family. As to quaternary structure, homodimer. Requires FMN as cofactor.

It catalyses the reaction 2 a quinone + NADH + H(+) = 2 a 1,4-benzosemiquinone + NAD(+). The enzyme catalyses N,N-dimethyl-1,4-phenylenediamine + anthranilate + 2 NAD(+) = 2-(4-dimethylaminophenyl)diazenylbenzoate + 2 NADH + 2 H(+). Quinone reductase that provides resistance to thiol-specific stress caused by electrophilic quinones. In terms of biological role, also exhibits azoreductase activity. Catalyzes the reductive cleavage of the azo bond in aromatic azo compounds to the corresponding amines. This Trichlorobacter lovleyi (strain ATCC BAA-1151 / DSM 17278 / SZ) (Geobacter lovleyi) protein is FMN-dependent NADH:quinone oxidoreductase.